Here is an 87-residue protein sequence, read N- to C-terminus: Small ribosomal subunit protein bS18 (87 aa).

Positions 1 to 20 are enriched in basic and acidic residues; that stretch reads MAGKSSGDRRKPIRKGKDGK. Residues 1–24 are disordered; the sequence is MAGKSSGDRRKPIRKGKDGKNAAP.

The protein belongs to the bacterial ribosomal protein bS18 family. In terms of assembly, part of the 30S ribosomal subunit. Forms a tight heterodimer with protein bS6.

Binds as a heterodimer with protein bS6 to the central domain of the 16S rRNA, where it helps stabilize the platform of the 30S subunit. This is Small ribosomal subunit protein bS18 from Leifsonia xyli subsp. xyli (strain CTCB07).